The following is a 337-amino-acid chain: Phosphate acyltransferase (337 aa).

This sequence belongs to the PlsX family. As to quaternary structure, homodimer. Probably interacts with PlsY.

Its subcellular location is the cytoplasm. It carries out the reaction a fatty acyl-[ACP] + phosphate = an acyl phosphate + holo-[ACP]. It functions in the pathway lipid metabolism; phospholipid metabolism. In terms of biological role, catalyzes the reversible formation of acyl-phosphate (acyl-PO(4)) from acyl-[acyl-carrier-protein] (acyl-ACP). This enzyme utilizes acyl-ACP as fatty acyl donor, but not acyl-CoA. This is Phosphate acyltransferase from Listeria innocua serovar 6a (strain ATCC BAA-680 / CLIP 11262).